Here is a 207-residue protein sequence, read N- to C-terminus: Na(+)-translocating ferredoxin:NAD(+) oxidoreductase complex subunit G (207 aa).

Residues 18–38 traverse the membrane as a helical segment; sequence GLILFVISAVAACALALTNYV. T185 carries the post-translational modification FMN phosphoryl threonine.

The protein belongs to the RnfG family. The complex is composed of six subunits: RnfA, RnfB, RnfC, RnfD, RnfE and RnfG. The cofactor is FMN.

The protein resides in the cell membrane. The enzyme catalyses 2 reduced [2Fe-2S]-[ferredoxin] + Na(+)(in) + NAD(+) + H(+) = 2 oxidized [2Fe-2S]-[ferredoxin] + Na(+)(out) + NADH. Functionally, part of a membrane-bound complex that couples electron transfer with translocation of ions across the membrane. Couples electron transfer from reduced ferredoxin to NAD(+) with electrogenic movement of Na(+) out of the cell. Involved in caffeate respiration. In Acetobacterium woodii (strain ATCC 29683 / DSM 1030 / JCM 2381 / KCTC 1655 / WB1), this protein is Na(+)-translocating ferredoxin:NAD(+) oxidoreductase complex subunit G.